The sequence spans 276 residues: Acyl-[acyl-carrier-protein]--UDP-N-acetylglucosamine O-acyltransferase (276 aa).

This sequence belongs to the transferase hexapeptide repeat family. LpxA subfamily. Homotrimer.

The protein localises to the cytoplasm. It catalyses the reaction a (3R)-hydroxyacyl-[ACP] + UDP-N-acetyl-alpha-D-glucosamine = a UDP-3-O-[(3R)-3-hydroxyacyl]-N-acetyl-alpha-D-glucosamine + holo-[ACP]. Its pathway is glycolipid biosynthesis; lipid IV(A) biosynthesis; lipid IV(A) from (3R)-3-hydroxytetradecanoyl-[acyl-carrier-protein] and UDP-N-acetyl-alpha-D-glucosamine: step 1/6. Involved in the biosynthesis of lipid A, a phosphorylated glycolipid that anchors the lipopolysaccharide to the outer membrane of the cell. The chain is Acyl-[acyl-carrier-protein]--UDP-N-acetylglucosamine O-acyltransferase from Gloeothece citriformis (strain PCC 7424) (Cyanothece sp. (strain PCC 7424)).